Consider the following 81-residue polypeptide: uncharacterized protein (81 aa).

Helical transmembrane passes span 4–24 and 61–81; these read IFKMSFAVIIIILALIAFNYT and NIYTAVFVWSVSLIGFTLHII.

Its subcellular location is the cell membrane. This is an uncharacterized protein from Bacillus subtilis (strain 168).